A 108-amino-acid chain; its full sequence is C-C motif chemokine 19 (108 aa).

An N-terminal signal peptide occupies residues Met-1–Gly-25. 2 disulfides stabilise this stretch: Cys-33–Cys-59 and Cys-34–Cys-75. An N-linked (GlcNAc...) asparagine glycan is attached at Asn-100.

It belongs to the intercrine beta (chemokine CC) family. Interacts with TNFAIP6 (via Link domain). In terms of tissue distribution, highly expressed by dendritic cells in mesenteric and peripheral lymph nodes. Significant expression in spleen (T cell zone or periarteriolar lymphatic sheath) and Peyer patches. Low expression in thymus.

The protein resides in the secreted. Functionally, strongly chemotactic for naive (L-selectinhi) CD4 T-cells and for CD8 T-cells and weakly attractive for resting B-cells and memory (L-selectinlo) CD4 T-cells. May play a role in promoting encounters between recirculating T-cells and dendritic cells and in the migration of activated B-cells into the T-zone of secondary lymphoid tissues. Binds to chemokine receptor CCR7. Binds to atypical chemokine receptor ACKR4 and mediates the recruitment of beta-arrestin (ARRB1/2) to ACKR4. The protein is C-C motif chemokine 19 (Ccl19) of Mus musculus (Mouse).